The primary structure comprises 394 residues: Elongation factor Tu (394 aa).

The region spanning Lys10–Lys204 is the tr-type G domain. Positions Gly19–Thr26 are G1. Residue Gly19–Thr26 coordinates GTP. Thr26 serves as a coordination point for Mg(2+). A G2 region spans residues Gly60–Asn64. Residues Asp81–Gly84 are G3. Residues Asp81–His85 and Asn136–Asp139 each bind GTP. Residues Asn136–Asp139 form a G4 region. Residues Ser174 to Leu176 are G5.

It belongs to the TRAFAC class translation factor GTPase superfamily. Classic translation factor GTPase family. EF-Tu/EF-1A subfamily. In terms of assembly, monomer.

The protein localises to the cytoplasm. It carries out the reaction GTP + H2O = GDP + phosphate + H(+). GTP hydrolase that promotes the GTP-dependent binding of aminoacyl-tRNA to the A-site of ribosomes during protein biosynthesis. The polypeptide is Elongation factor Tu (Blochmanniella pennsylvanica (strain BPEN)).